The sequence spans 78 residues: MALFEDIQAVIAEQLNVDAAQVTPEAEFVKDLGADSLDVVELIMALEEKFGVEIPDEQAEKIVNVGDVVKYIEDNKLA.

A Carrier domain is found at 1–76 (MALFEDIQAV…DVVKYIEDNK (76 aa)). Serine 36 is subject to O-(pantetheine 4'-phosphoryl)serine.

This sequence belongs to the acyl carrier protein (ACP) family. Post-translationally, 4'-phosphopantetheine is transferred from CoA to a specific serine of apo-ACP by AcpS. This modification is essential for activity because fatty acids are bound in thioester linkage to the sulfhydryl of the prosthetic group.

The protein localises to the cytoplasm. It functions in the pathway lipid metabolism; fatty acid biosynthesis. Functionally, carrier of the growing fatty acid chain in fatty acid biosynthesis. In Helicobacter pylori (strain G27), this protein is Acyl carrier protein.